Consider the following 85-residue polypeptide: Small ribosomal subunit protein bS18 (85 aa).

It belongs to the bacterial ribosomal protein bS18 family. In terms of assembly, part of the 30S ribosomal subunit. Forms a tight heterodimer with protein bS6.

Its function is as follows. Binds as a heterodimer with protein bS6 to the central domain of the 16S rRNA, where it helps stabilize the platform of the 30S subunit. The chain is Small ribosomal subunit protein bS18 from Helicobacter pylori (strain Shi470).